The following is a 210-amino-acid chain: FMN-dependent NADH:quinone oxidoreductase (210 aa).

FMN is bound by residues 17 to 19 (SCS) and 148 to 151 (SSGG).

Belongs to the azoreductase type 1 family. As to quaternary structure, homodimer. It depends on FMN as a cofactor.

The catalysed reaction is 2 a quinone + NADH + H(+) = 2 a 1,4-benzosemiquinone + NAD(+). The enzyme catalyses N,N-dimethyl-1,4-phenylenediamine + anthranilate + 2 NAD(+) = 2-(4-dimethylaminophenyl)diazenylbenzoate + 2 NADH + 2 H(+). Functionally, quinone reductase that provides resistance to thiol-specific stress caused by electrophilic quinones. Also exhibits azoreductase activity. Catalyzes the reductive cleavage of the azo bond in aromatic azo compounds to the corresponding amines. This chain is FMN-dependent NADH:quinone oxidoreductase, found in Geotalea uraniireducens (strain Rf4) (Geobacter uraniireducens).